Consider the following 176-residue polypeptide: Ribosome maturation factor RimM (176 aa).

A PRC barrel domain is found at 93–166 (ADEYYHADLI…QVVIEPPNEI (74 aa)).

This sequence belongs to the RimM family. Binds ribosomal protein uS19.

The protein resides in the cytoplasm. Functionally, an accessory protein needed during the final step in the assembly of 30S ribosomal subunit, possibly for assembly of the head region. Essential for efficient processing of 16S rRNA. May be needed both before and after RbfA during the maturation of 16S rRNA. It has affinity for free ribosomal 30S subunits but not for 70S ribosomes. The sequence is that of Ribosome maturation factor RimM from Rhodopseudomonas palustris (strain ATCC BAA-98 / CGA009).